The sequence spans 914 residues: MATTPDAAFETLMNGVTSWDLPKEPIPSELLLTGESAFPVMVNDKGQVLIAASSYGQGRLVVVSHESYLLHDGLVPFLLNVVKWLCPCPGAPIAVHSSLASLVNILGDSGINALVQPEPGEALGVYCIDAYNDALTEKLIQFLKNGGGLLIGGQALNWAAHHGHDKVLSIFPGNQVTSVAGVYFTDISANRDWFKVSKEIPNLRLYVQCEDELEDDQQQLLKGMSEIYIEAGVIPSQLLVHGQRAFPLGVDNSLNCFLAAARYGRGRVVLGGNESLILNQTMLPFVLNALHWLMGNQTGRIGLASDMKVLKSMLPNSSFQWSESELLTSDLSVFCCCSLANIDSEEVEEFVAEGGGLLIGAEAWSWGRRNPYSSCMTQYPDNIVLKRFGLGITSHVAQRGSFPFPNPEGTNYHFRRALSQFESVIYSRGSSLHESWLNKLSQDCFYMFQMTHQRISIYDSVKKHALKMIQSKDFPSVTEQYPIARGSSQAFLLSLAYELFKSGVDRSQLLPPPALLPPTESPITIKISTDNDNSWVSTGLYLPEGQVAQVLLPSEATHAKLKVLIGCHRDNISQARTYFRPPVMTYVYHLTSSQTSISWLYGGLLYIMVPNKYNQDNVSVTIRGAVSAPYFRLGKTTQEEWKNLITHSKAPWGELATDNIILTIPTVNLKELQDPYPLLQLWDKMVRAVAKLAARPFPFQRAERVVLDKQISFGFLHSGYPIMGLISIVEGIISEFKIRSHGIWGVIHELGHNHQKSGWTFPPHTTEALCNLWTIYVHETVLNIPREQAHPSLNPELRRQRIKYHLNKGAPLSNWIMWTALETYLQLQEGFGWEPFIQVFADYRTLSGLPQNNEDKMNLWVKKFSEAVHKNLAPFFEAWGWPVKYAVAKSLASLPEWQENPMKRYTAEGTEGRE.

The Peptidase M60 domain occupies 533 to 832; the sequence is NSWVSTGLYL…TYLQLQEGFG (300 aa).

This sequence belongs to the TCAF family. In terms of tissue distribution, prostate-specific. Present in both dorso-lateral and anterior prostate.

May play a role in the regulation of the cation channel TRPM8 activity. The chain is TRPM8 channel-associated factor 3 from Mus musculus (Mouse).